The primary structure comprises 172 residues: Transcriptional regulator TAC1 (172 aa).

A disordered region spans residues 1–28 (MENIKNPKNADDCSDSISKNSHQGVDDS). The segment covering 15-28 (DSISKNSHQGVDDS) has biased composition (polar residues). The segment at 35-57 (YVCSFCIRGFSNAQALGGHMNIH) adopts a C2H2-type zinc-finger fold. An EAR-like (transcriptional repression) motif is present at residues 156 to 160 (LDLEL).

As to expression, preferentially expressed in roots and flowers. Slightly expressed in leaves and stems.

It localises to the nucleus. Functionally, activation factor which mediates telomerase activity and potentiates responses to auxin through the regulation of BT2. Binds in vitro to the DNA sequence 5'-GACAGTGTTAC-3' of the BT2 promoter. This Arabidopsis thaliana (Mouse-ear cress) protein is Transcriptional regulator TAC1 (TAC1).